We begin with the raw amino-acid sequence, 447 residues long: Oxysterols receptor LXR-alpha (447 aa).

The tract at residues 1-88 (MSLWLEAPVP…LRPQKRKKGP (88 aa)) is disordered. Residues 1 to 96 (MSLWLEAPVP…GPAPKMLGNE (96 aa)) form a transactivation AF-1; required for ligand-independent transactivation function region. The segment at residues 95-170 (NELCSVCGDK…AGMREECVLS (76 aa)) is a DNA-binding region (nuclear receptor). NR C4-type zinc fingers lie at residues 98-118 (CSVC…CEGC) and 134-158 (CHSG…LRKC). The disordered stretch occupies residues 178–203 (KMKRQEEEQAQATSAPPRASSPPQVL). Positions 187 to 203 (AQATSAPPRASSPPQVL) are enriched in low complexity. Positions 205 to 447 (QLSPEQLGMI…LLSEIWDVHE (243 aa)) are transactivation AF-2; required for ligand-dependent transactivation function; mediates interaction with CCAR2. The NR LBD domain maps to 209 to 447 (EQLGMIEKLV…LLSEIWDVHE (239 aa)).

The protein belongs to the nuclear hormone receptor family. NR1 subfamily. Heterodimer of NR1H3 and RXR (retinoic acid receptor). Interacts with CCAR2 (via N-terminus) in a ligand-independent manner. Interacts with SIRT1 and this interaction is inhibited by CCAR2. In terms of processing, ubiquitinated by UBR5, leading to its degradation: UBR5 specifically recognizes and binds ligand-bound NR1H3 when it is not associated with coactivators (NCOAs). In presence of NCOAs, the UBR5-degron is not accessible, preventing its ubiquitination and degradation.

The protein localises to the nucleus. The protein resides in the cytoplasm. In terms of biological role, nuclear receptor that exhibits a ligand-dependent transcriptional activation activity. Interaction with retinoic acid receptor (RXR) shifts RXR from its role as a silent DNA-binding partner to an active ligand-binding subunit in mediating retinoid responses through target genes defined by LXRES. LXRES are DR4-type response elements characterized by direct repeats of two similar hexanuclotide half-sites spaced by four nucleotides. Plays an important role in the regulation of cholesterol homeostasis, regulating cholesterol uptake through MYLIP-dependent ubiquitination of LDLR, VLDLR and LRP8. Interplays functionally with RORA for the regulation of genes involved in liver metabolism. Induces LPCAT3-dependent phospholipid remodeling in endoplasmic reticulum (ER) membranes of hepatocytes, driving SREBF1 processing and lipogenesis. Via LPCAT3, triggers the incorporation of arachidonate into phosphatidylcholines of ER membranes, increasing membrane dynamics and enabling triacylglycerols transfer to nascent very low-density lipoprotein (VLDL) particles. Via LPCAT3 also counteracts lipid-induced ER stress response and inflammation, likely by modulating SRC kinase membrane compartmentalization and limiting the synthesis of lipid inflammatory mediators. This is Oxysterols receptor LXR-alpha (NR1H3) from Bos taurus (Bovine).